The primary structure comprises 1910 residues: Endoribonuclease dcr-1 (1910 aa).

In terms of domain architecture, Helicase ATP-binding spans 20-201 (LLDKATKKNT…KLMEQLKKLE (182 aa)). 33–40 (LGTGSGKT) contributes to the ATP binding site. Positions 145–148 (DECH) match the DEAH box motif. The Helicase C-terminal domain maps to 371-542 (EFQKERMKLE…TVNNPIEDDS (172 aa)). Residues 571-667 (AIALINRYCS…LPKGRESIAK (97 aa)) form the Dicer dsRNA-binding fold domain. In terms of domain architecture, PAZ spans 845–1003 (YVSEVVANME…LVPELMDIHP (159 aa)). Disordered stretches follow at residues 951-988 (RIQN…VPHS), 1227-1248 (TASS…KQLT), and 1272-1309 (LEMS…PTNF). 2 stretches are compositionally biased toward polar residues: residues 970 to 988 (IPQA…VPHS) and 1227 to 1245 (TASS…SPPK). Residues 1245–1280 (KQLTKEEEQFKKLQNDLLKQAKERLEALEMSEDMEK) adopt a coiled-coil conformation. The span at 1272-1286 (LEMSEDMEKPRRLED) shows a compositional bias: basic and acidic residues. Acidic residues predominate over residues 1288–1304 (VNLEDYGDDQENQEDEN). RNase III domains lie at 1381–1589 (VSHI…LTLG) and 1643–1805 (FTQL…LDSG). Residues Glu1682, Asp1791, and Glu1794 each coordinate Mg(2+). Positions 1833–1896 (SPIRELMEFE…AKRALKYLHQ (64 aa)) constitute a DRBM domain.

This sequence belongs to the helicase family. Dicer subfamily. As to quaternary structure, component of the ERI/DICER complex at least composed of dcr-1, rrf-3 and eri-1. Interacts with pir-1. The cofactor is Mg(2+). Requires Mn(2+) as cofactor.

In terms of biological role, component of the ERI/DICER complex which is involved in processing amplified double-stranded RNA (dsRNA) intermediates during small-RNA-mediated gene-silencing or RNA interference (RNAi). Involved in cleaving dsRNA in the RNAi pathway. It produces 21 to 23 bp dsRNAs (siRNAs) which target the selective destruction of homologous RNAs. Seems to process the precursor of the small temporal RNA let-7 which is involved in developmental timing. Required for avoidance behavior induced by small RNAs derived from pathogenic bacteria such as P.aeruginosa. Involved in innate immunity through its role in small RNA processing. Functionally, tDCR-1 acts as a deoxyribonuclease (DNase) initiating DNA fragmentation during apoptosis, upstream of nucleases cps-6, crn-2 and nuc-1. In Caenorhabditis elegans, this protein is Endoribonuclease dcr-1.